Consider the following 91-residue polypeptide: Defensin-like protein 95 (91 aa).

Positions 1–27 (MGSLKLSTFAIVVCLSILLISPIEVNG) are cleaved as a signal peptide. 4 disulfides stabilise this stretch: Cys-31/Cys-76, Cys-38/Cys-63, Cys-47/Cys-73, and Cys-51/Cys-75.

This sequence belongs to the DEFL family.

It is found in the secreted. The protein is Defensin-like protein 95 of Arabidopsis thaliana (Mouse-ear cress).